A 486-amino-acid chain; its full sequence is Cardiolipin synthase A (486 aa).

Transmembrane regions (helical) follow at residues Thr-3–Val-23 and Met-38–Val-58. PLD phosphodiesterase domains lie at Met-219–Arg-246 and Glu-399–Ser-426. Residues His-224, Lys-226, Asp-231, His-404, Lys-406, and Asp-411 contribute to the active site.

Belongs to the phospholipase D family. Cardiolipin synthase subfamily. ClsA sub-subfamily.

It is found in the cell inner membrane. It carries out the reaction 2 a 1,2-diacyl-sn-glycero-3-phospho-(1'-sn-glycerol) = a cardiolipin + glycerol. Its function is as follows. Catalyzes the reversible phosphatidyl group transfer from one phosphatidylglycerol molecule to another to form cardiolipin (CL) (diphosphatidylglycerol) and glycerol. In Salmonella arizonae (strain ATCC BAA-731 / CDC346-86 / RSK2980), this protein is Cardiolipin synthase A.